A 111-amino-acid polypeptide reads, in one-letter code: Stress-response A/B barrel domain-containing protein At5g22580 (111 aa).

One can recognise a Stress-response A/B barrel domain in the interval 6–98 (FKHLVVVKFK…VIDKIVLLDF (93 aa)). Mg(2+) contacts are provided by valine 31, isoleucine 34, aspartate 35, and valine 37.

In terms of assembly, homodimer. Mg(2+) is required as a cofactor.

Involved in stress response. This chain is Stress-response A/B barrel domain-containing protein At5g22580, found in Arabidopsis thaliana (Mouse-ear cress).